The chain runs to 35 residues: Photosystem II reaction center protein T (35 aa).

The helical transmembrane segment at 3–23 (ALVYTFLLVSTLGIIFFAIFF) threads the bilayer.

The protein belongs to the PsbT family. PSII is composed of 1 copy each of membrane proteins PsbA, PsbB, PsbC, PsbD, PsbE, PsbF, PsbH, PsbI, PsbJ, PsbK, PsbL, PsbM, PsbT, PsbY, PsbZ, Psb30/Ycf12, at least 3 peripheral proteins of the oxygen-evolving complex and a large number of cofactors. It forms dimeric complexes.

The protein resides in the plastid. Its subcellular location is the chloroplast thylakoid membrane. Found at the monomer-monomer interface of the photosystem II (PS II) dimer, plays a role in assembly and dimerization of PSII. PSII is a light-driven water plastoquinone oxidoreductase, using light energy to abstract electrons from H(2)O, generating a proton gradient subsequently used for ATP formation. The polypeptide is Photosystem II reaction center protein T (Asarum canadense (Wild ginger)).